The sequence spans 409 residues: MNKFLKEFKDRGFFYQCTGEENLSQLLDKEKIRAYIGFDCTAESLHVGSLLQIMCLRLLQKHGHQPIVLLGGGTTRIGDPSGKDKTRTILSEDEIEKNINNIEKILKNFLDDKDPETKPIFVNNYTWLKNLNYISFLRDVGKHFTINKMLSFDSVKIRLEREQSLSYMEFNYMILQAYDFLELNKKEKCMLQIGGSDQWGNIVNGVDLIKRYSNNHVYGLTTPLITLASGAKMGKTESGAVWLDKKFLSSYDYWQFWRNIDDRDVLKFLKIFTDINVDEIENIKDDNINELKILLANKATSMLHGEDEARKCQETAKQTFSENSLGDNLPTTQINKKMLDDNISILDLVILSKLESSKSEIRRLIKGNGIKINGQAISDEKFLITEDLFKSSLIKLSLGKKKHIKVELI.

Tyr-35 provides a ligand contact to L-tyrosine. The 'HIGH' region signature appears at 40 to 49 (CTAESLHVGS). Residues Tyr-172 and Gln-176 each contribute to the L-tyrosine site. Positions 232–236 (KMGKT) match the 'KMSKS' region motif. ATP is bound at residue Lys-235. The S4 RNA-binding domain occupies 343 to 409 (ISILDLVILS…KKKHIKVELI (67 aa)).

The protein belongs to the class-I aminoacyl-tRNA synthetase family. TyrS type 1 subfamily. In terms of assembly, homodimer.

It localises to the cytoplasm. It catalyses the reaction tRNA(Tyr) + L-tyrosine + ATP = L-tyrosyl-tRNA(Tyr) + AMP + diphosphate + H(+). Functionally, catalyzes the attachment of tyrosine to tRNA(Tyr) in a two-step reaction: tyrosine is first activated by ATP to form Tyr-AMP and then transferred to the acceptor end of tRNA(Tyr). The sequence is that of Tyrosine--tRNA ligase from Pelagibacter ubique (strain HTCC1062).